Here is a 212-residue protein sequence, read N- to C-terminus: 3,4-dihydroxy-2-butanone 4-phosphate synthase (212 aa).

D-ribulose 5-phosphate is bound by residues 37–38 (RE), aspartate 42, 150–154 (RRGHT), and glutamate 174. Glutamate 38 contributes to the Mg(2+) binding site. Histidine 153 serves as a coordination point for Mg(2+).

The protein belongs to the DHBP synthase family. Homodimer. Mg(2+) is required as a cofactor. It depends on Mn(2+) as a cofactor.

The enzyme catalyses D-ribulose 5-phosphate = (2S)-2-hydroxy-3-oxobutyl phosphate + formate + H(+). The protein operates within cofactor biosynthesis; riboflavin biosynthesis; 2-hydroxy-3-oxobutyl phosphate from D-ribulose 5-phosphate: step 1/1. Functionally, catalyzes the conversion of D-ribulose 5-phosphate to formate and 3,4-dihydroxy-2-butanone 4-phosphate. In Shewanella piezotolerans (strain WP3 / JCM 13877), this protein is 3,4-dihydroxy-2-butanone 4-phosphate synthase.